A 273-amino-acid polypeptide reads, in one-letter code: uncharacterized protein (273 aa).

This is an uncharacterized protein from Acanthamoeba polyphaga mimivirus (APMV).